The primary structure comprises 174 residues: Co-chaperone protein HscB (174 aa).

Positions 2–74 (DYFTLFGLPA…LKRAEYMLSL (73 aa)) constitute a J domain.

Belongs to the HscB family. Interacts with HscA and stimulates its ATPase activity. Interacts with IscU.

Functionally, co-chaperone involved in the maturation of iron-sulfur cluster-containing proteins. Seems to help targeting proteins to be folded toward HscA. The chain is Co-chaperone protein HscB from Yersinia pseudotuberculosis serotype O:1b (strain IP 31758).